The chain runs to 381 residues: Protein TRIGALACTOSYLDIACYLGLYCEROL 2, chloroplastic (381 aa).

The transit peptide at 1–45 directs the protein to the chloroplast; sequence MIGNPVIQVPSSLMPSSSMIACPRVSPNGVPYLPPKPRTRHLVVR. The Stromal segment spans residues 46–96; that stretch reads AASNSDAAHGQPSSDGGKNPLTVVLDVPRNIWRQTLKPLSDFGFGKRSIWE. A helical membrane pass occupies residues 97-117; sequence GGVGLFIVSGATLLALSWAWL. The Chloroplast intermembrane segment spans residues 118 to 381; it reads RGFQMRSKFR…LLIKSLSRLL (264 aa).

In terms of assembly, homomultimer. Substrate-binding subunit of the TGD complex, a lipid translocator at the inner chloroplast envelope membrane made of TGD1, TGD2 and TGD3. Interacts with TGD1 and TGD3 with an overall subunit stoichiometry of 2 TGD1, 2 TGD3 and 8 to 12 TGD2. Interacts with TGD5.

Its subcellular location is the plastid. It is found in the chloroplast inner membrane. Component of a phosphatidic acid/lipid transport complex in the chloroplast envelope. Specifically binds phosphatidic acid (PA). Involved in lipid transfer from the endoplasmic reticulum (ER) to plastids, and necessary for thylakoids formation. The polypeptide is Protein TRIGALACTOSYLDIACYLGLYCEROL 2, chloroplastic (Arabidopsis thaliana (Mouse-ear cress)).